The primary structure comprises 1150 residues: ATP-dependent helicase/deoxyribonuclease subunit B (1150 aa).

8–15 (GRSGSGKS) contributes to the ATP binding site. [4Fe-4S] cluster is bound by residues cysteine 789, cysteine 1108, cysteine 1111, and cysteine 1117.

The protein belongs to the helicase family. AddB/RexB type 1 subfamily. In terms of assembly, heterodimer of AddA and AddB. It depends on Mg(2+) as a cofactor. [4Fe-4S] cluster is required as a cofactor.

Functionally, the heterodimer acts as both an ATP-dependent DNA helicase and an ATP-dependent, dual-direction single-stranded exonuclease. Recognizes the chi site generating a DNA molecule suitable for the initiation of homologous recombination. The AddB subunit has 5' -&gt; 3' nuclease activity but not helicase activity. The protein is ATP-dependent helicase/deoxyribonuclease subunit B of Clostridium tetani (strain Massachusetts / E88).